The chain runs to 519 residues: MATVPTYHDLSFYSNPKENKARYAKLLNSFEQKYHCKPDFFSRSPGRVNIIGEHIDYNYFSVLPMAIDVDVIVSVTTSDDAKVELNNTNPEFKEEILELPSDGAVIEINKTHHTWGNYFRCSMIVAHKYILEKYPELVSGGKKPLKGLKLIFDGNVPTGGGLSSSAAFCVASILAILKANGINTITKEDLVKISVVSEHYVGVNTGGMDQCASIYGEQNKALLVQFKPKLMATPFKMPVLKPHDMVFLISNTLVEANKQETALTNYNLRVVEMAVASEFLAKKFNLELPKESNLHTGTLRGFMDEYYEKHLKQPHWDGSDIDMGVQRMQEMLRLTEIMFSEEQKVGFKTEELAKELGLSVEEFTKVFLTKIPVKYERMKIYQRTVHVYSDAMRVLQVLKLFHQHKDSDDPQKFMLAFGRLLNDSQRSEDIYNNSSSPELREVCKISLANGGYGARTTGAGWGGSAVHLTTHDKLAKLVEALTEQYYKKQFPKITQSELNAAVVVSKPAAGSCIVQLAEY.

Alpha-D-galactose is bound by residues arginine 47, glutamate 53, histidine 54, and aspartate 56. Residues glycine 159, glycine 161, serine 163, and serine 164 each coordinate ATP. Aspartate 209 lines the alpha-D-galactose pocket. The Proton acceptor role is filled by aspartate 209. Asparagine 257 and lysine 258 together coordinate ATP. Position 266 (tyrosine 266) interacts with alpha-D-galactose.

Belongs to the GHMP kinase family. GalK subfamily.

It carries out the reaction alpha-D-galactose + ATP = alpha-D-galactose 1-phosphate + ADP + H(+). It functions in the pathway carbohydrate metabolism; galactose metabolism. Galactokinase is a key enzyme in the galactose metabolism where it catalyzes the conversion of alpha-D-galactose to galactose 1-phosphate. Can also induce the transcription of the gal genes in response to the organism being challenged with galactose as the sole source of carbon. The chain is Galactokinase (gal1) from Schizosaccharomyces pombe (strain 972 / ATCC 24843) (Fission yeast).